Here is a 209-residue protein sequence, read N- to C-terminus: Pyridoxine/pyridoxamine 5'-phosphate oxidase (209 aa).

Substrate-binding positions include 7 to 10 (REDY) and K64. FMN is bound by residues 59 to 64 (RIVLLK), 74 to 75 (FT), R80, and K81. Residues Y121, R125, and S129 each coordinate substrate. FMN is bound by residues 138–139 (QS) and W182. 188–190 (RLH) is a binding site for substrate. Position 192 (R192) interacts with FMN.

This sequence belongs to the pyridoxamine 5'-phosphate oxidase family. Homodimer. FMN is required as a cofactor.

The catalysed reaction is pyridoxamine 5'-phosphate + O2 + H2O = pyridoxal 5'-phosphate + H2O2 + NH4(+). The enzyme catalyses pyridoxine 5'-phosphate + O2 = pyridoxal 5'-phosphate + H2O2. Its pathway is cofactor metabolism; pyridoxal 5'-phosphate salvage; pyridoxal 5'-phosphate from pyridoxamine 5'-phosphate: step 1/1. It participates in cofactor metabolism; pyridoxal 5'-phosphate salvage; pyridoxal 5'-phosphate from pyridoxine 5'-phosphate: step 1/1. Catalyzes the oxidation of either pyridoxine 5'-phosphate (PNP) or pyridoxamine 5'-phosphate (PMP) into pyridoxal 5'-phosphate (PLP). The polypeptide is Pyridoxine/pyridoxamine 5'-phosphate oxidase (Actinobacillus pleuropneumoniae serotype 5b (strain L20)).